The following is a 368-amino-acid chain: Seven-bladed beta-propeller protein MSMEG_5308 (368 aa).

Interacts with MmpL3 and TtfA.

Its subcellular location is the cell septum. The protein resides in the cell tip. In terms of biological role, stabilizes the MmpL3/TtfA trehalose monomycolate (TMM) transport complex under stress conditions. This Mycolicibacterium smegmatis (strain ATCC 700084 / mc(2)155) (Mycobacterium smegmatis) protein is Seven-bladed beta-propeller protein MSMEG_5308.